Here is a 93-residue protein sequence, read N- to C-terminus: Guanine nucleotide-binding protein subunit gamma (93 aa).

The disordered stretch occupies residues 1-22 (MPQYASRDVGDPSQIKKNKQSM). Residue cysteine 89 is the site of S-palmitoyl cysteine attachment. Cysteine 90 bears the Cysteine methyl ester mark. Cysteine 90 carries the S-farnesyl cysteine lipid modification. A propeptide spans 91–93 (VVM) (removed in mature form).

The protein belongs to the G protein gamma family. In terms of assembly, g proteins are composed of 3 units, alpha, beta and gamma.

It localises to the membrane. The chain is Guanine nucleotide-binding protein subunit gamma (gng-1) from Neurospora crassa (strain ATCC 24698 / 74-OR23-1A / CBS 708.71 / DSM 1257 / FGSC 987).